A 357-amino-acid polypeptide reads, in one-letter code: MHNQYGSIFSITTWGESHGPAIGVVIDGCPAGLSLSPEDFLPAMARRRPGQLHTSPRQEPDLVTILSGVYQNKTTGTPISLLIENKDVSSSSYEQLQHCYRPGHAQFAYEGKYGFADNRGGGRASARETASRVAAGVIAKKILLSQRIETLAFLSGFGTLESKNYPKLSDSLIQQVHTSPFYTLLPQEEIQNLLLLNPDDSFGGVVSFITSPLPIGLGEPVFGKLPALLAAAMMSIPAAKGFEIGAGFSSSQMTGSAYLDAFIADESGVSLQSNRCGGALGGISIGQPLEGRVAFKPTSSIKKPCSSVLKDGTPIAYRTPNQGRHDPCVAIRAVAVVEAMLDLTLVDLLLQHRCTQL.

Position 47 (Arg-47) interacts with NADP(+). Residues 123-125 (RAS), Gly-281, 296-300 (KPTSS), and Arg-324 each bind FMN.

This sequence belongs to the chorismate synthase family. Homotetramer. The cofactor is FMNH2.

The catalysed reaction is 5-O-(1-carboxyvinyl)-3-phosphoshikimate = chorismate + phosphate. The protein operates within metabolic intermediate biosynthesis; chorismate biosynthesis; chorismate from D-erythrose 4-phosphate and phosphoenolpyruvate: step 7/7. Its function is as follows. Catalyzes the anti-1,4-elimination of the C-3 phosphate and the C-6 proR hydrogen from 5-enolpyruvylshikimate-3-phosphate (EPSP) to yield chorismate, which is the branch point compound that serves as the starting substrate for the three terminal pathways of aromatic amino acid biosynthesis. This reaction introduces a second double bond into the aromatic ring system. The chain is Chorismate synthase from Chlamydia trachomatis serovar A (strain ATCC VR-571B / DSM 19440 / HAR-13).